The primary structure comprises 453 residues: Ribosomal protein uS12 methylthiotransferase RimO (453 aa).

An MTTase N-terminal domain is found at 5–120; the sequence is PKVGFVSLGC…VMQAVHSHLP (116 aa). Residues C14, C50, C79, C151, C155, and C158 each contribute to the [4Fe-4S] cluster site. In terms of domain architecture, Radical SAM core spans 137 to 382; sequence LTPRHYAYLK…MEVAEEVSAN (246 aa). One can recognise a TRAM domain in the interval 385 to 453; it reads QRKIGKTLKV…ADGHDLWGEV (69 aa).

The protein belongs to the methylthiotransferase family. RimO subfamily. Requires [4Fe-4S] cluster as cofactor.

It is found in the cytoplasm. It catalyses the reaction L-aspartate(89)-[ribosomal protein uS12]-hydrogen + (sulfur carrier)-SH + AH2 + 2 S-adenosyl-L-methionine = 3-methylsulfanyl-L-aspartate(89)-[ribosomal protein uS12]-hydrogen + (sulfur carrier)-H + 5'-deoxyadenosine + L-methionine + A + S-adenosyl-L-homocysteine + 2 H(+). Its function is as follows. Catalyzes the methylthiolation of an aspartic acid residue of ribosomal protein uS12. In Burkholderia orbicola (strain MC0-3), this protein is Ribosomal protein uS12 methylthiotransferase RimO.